The primary structure comprises 701 residues: Ribosomal RNA large subunit methyltransferase K/L (701 aa).

The 112-residue stretch at Leu43–Leu154 folds into the THUMP domain.

The protein belongs to the methyltransferase superfamily. RlmKL family.

The protein resides in the cytoplasm. It carries out the reaction guanosine(2445) in 23S rRNA + S-adenosyl-L-methionine = N(2)-methylguanosine(2445) in 23S rRNA + S-adenosyl-L-homocysteine + H(+). The catalysed reaction is guanosine(2069) in 23S rRNA + S-adenosyl-L-methionine = N(2)-methylguanosine(2069) in 23S rRNA + S-adenosyl-L-homocysteine + H(+). In terms of biological role, specifically methylates the guanine in position 2445 (m2G2445) and the guanine in position 2069 (m7G2069) of 23S rRNA. In Klebsiella pneumoniae subsp. pneumoniae (strain ATCC 700721 / MGH 78578), this protein is Ribosomal RNA large subunit methyltransferase K/L.